The sequence spans 347 residues: Phenylalanine--tRNA ligase alpha subunit (347 aa).

E259 is a binding site for Mg(2+).

The protein belongs to the class-II aminoacyl-tRNA synthetase family. Phe-tRNA synthetase alpha subunit type 1 subfamily. Tetramer of two alpha and two beta subunits. The cofactor is Mg(2+).

The protein localises to the cytoplasm. It carries out the reaction tRNA(Phe) + L-phenylalanine + ATP = L-phenylalanyl-tRNA(Phe) + AMP + diphosphate + H(+). This is Phenylalanine--tRNA ligase alpha subunit from Oenococcus oeni (strain ATCC BAA-331 / PSU-1).